The chain runs to 188 residues: Nicotinamide-nucleotide adenylyltransferase (188 aa).

The interval 166–188 is disordered; the sequence is SDSLERYAATGESLPESLDDLDD.

It belongs to the archaeal NMN adenylyltransferase family.

The protein localises to the cytoplasm. It catalyses the reaction beta-nicotinamide D-ribonucleotide + ATP + H(+) = diphosphate + NAD(+). Its pathway is cofactor biosynthesis; NAD(+) biosynthesis; NAD(+) from nicotinamide D-ribonucleotide: step 1/1. This is Nicotinamide-nucleotide adenylyltransferase from Haloarcula marismortui (strain ATCC 43049 / DSM 3752 / JCM 8966 / VKM B-1809) (Halobacterium marismortui).